We begin with the raw amino-acid sequence, 68 residues long: Agnoprotein (68 aa).

Over 1–24 the chain is Cytoplasmic; that stretch reads MVLRQLSRQASVKVGKTWTGTKRR. Residues Ser7 and Ser11 each carry the phosphoserine; by host modification. At Thr21 the chain carries Phosphothreonine; by host. A helical; Signal-anchor for type II membrane protein membrane pass occupies residues 25 to 41; that stretch reads AQRIFIFILELLLDFCR. The Extracellular segment spans residues 42–68; it reads GEDSVDGKKKKDSLTDKTETVTEKKES. Residues 44–68 are disordered; that stretch reads DSVDGKKKKDSLTDKTETVTEKKES.

The protein belongs to the polyomavirus agnoprotein family. As to quaternary structure, homooligomer. Interacts with VP1. Interacts with large T antigen; this interaction may impact upon the activity of T-antigen on the control of viral gene transcription and replication. Interacts with small t antigen. Interacts with host CBX5; this interaction induces the dissociation of CBX5 from LBR, resulting in destabilization of the nuclear envelope. Post-translationally, phosphorylated by host PKC. Phosphorylation alters the stability and may also have an impact on the subcellular location.

It is found in the host cytoplasm. The protein resides in the host nucleus membrane. The protein localises to the host rough endoplasmic reticulum membrane. Its subcellular location is the host cell membrane. Alters the structure of the nuclear envelope by interacting with host CBX5 and disrupting CBX5 association with LBR. Involved in the perinuclear-nuclear localization of the capsid protein VP1 during virion assembly and maturation. Plays an important role in the release of progeny virions from infected cells and in viral propagation, probably by acting as a viral ionic channel in the host plasma membrane. Allows influx of extracellular calcium ions in the host cell. May contribute to viral genome transcription and translation of viral late proteins. The sequence is that of Agnoprotein from Simian virus 12 (strain wt100) (SV-12).